The chain runs to 165 residues: MAILTMEELAERLPPYQSVAGLDLGTKTIGISVSDLGRRFATPREVIRRVKFGADAQALLSFAEKEKIAAFIIGLPVNMDGSEGPRCQATRAFVRNMGEKTDIPFVLWDERLSTVAAERVLIEMDVSRKKRAERIDSAAASFILQGALDRLASLARGASGDRDAP.

This sequence belongs to the YqgF nuclease family.

It localises to the cytoplasm. Its function is as follows. Could be a nuclease involved in processing of the 5'-end of pre-16S rRNA. The protein is Putative pre-16S rRNA nuclease of Rhizobium meliloti (strain 1021) (Ensifer meliloti).